Consider the following 447-residue polypeptide: Elongation factor 1-alpha (447 aa).

Positions 5-230 (KIHISIVVIG…DQISEPKRPS (226 aa)) constitute a tr-type G domain. Residues 14–21 (GHVDSGKS) are G1. 14–21 (GHVDSGKS) is a GTP binding site. The residue at position 55 (Lys-55) is an N6,N6-dimethyllysine. The tract at residues 70 to 74 (GITID) is G2. N6,N6,N6-trimethyllysine is present on Lys-79. The tract at residues 91–94 (DAPG) is G3. GTP-binding positions include 91–95 (DAPGH) and 153–156 (NKMD). Residues 153–156 (NKMD) are G4. Lys-187 bears the N6,N6,N6-trimethyllysine mark. Residues 194-196 (SGF) form a G5 region. Residue Lys-261 is modified to N6-methyllysine. 5-glutamyl glycerylphosphorylethanolamine is present on Glu-289. Position 306 is an N6,N6,N6-trimethyllysine (Lys-306). Glu-362 is subject to 5-glutamyl glycerylphosphorylethanolamine. At Lys-396 the chain carries N6,N6,N6-trimethyllysine.

It belongs to the TRAFAC class translation factor GTPase superfamily. Classic translation factor GTPase family. EF-Tu/EF-1A subfamily.

The protein localises to the cytoplasm. Functionally, this protein promotes the GTP-dependent binding of aminoacyl-tRNA to the A-site of ribosomes during protein biosynthesis. The polypeptide is Elongation factor 1-alpha (Daucus carota (Wild carrot)).